The primary structure comprises 247 residues: Ubiquinone biosynthesis O-methyltransferase (247 aa).

Residues R39, G70, D91, and M134 each coordinate S-adenosyl-L-methionine.

Belongs to the methyltransferase superfamily. UbiG/COQ3 family.

It carries out the reaction a 3-demethylubiquinol + S-adenosyl-L-methionine = a ubiquinol + S-adenosyl-L-homocysteine + H(+). It catalyses the reaction a 3-(all-trans-polyprenyl)benzene-1,2-diol + S-adenosyl-L-methionine = a 2-methoxy-6-(all-trans-polyprenyl)phenol + S-adenosyl-L-homocysteine + H(+). It participates in cofactor biosynthesis; ubiquinone biosynthesis. Functionally, O-methyltransferase that catalyzes the 2 O-methylation steps in the ubiquinone biosynthetic pathway. This Cereibacter sphaeroides (strain ATCC 17029 / ATH 2.4.9) (Rhodobacter sphaeroides) protein is Ubiquinone biosynthesis O-methyltransferase.